The chain runs to 93 residues: DNA/RNA-binding protein Alba (93 aa).

N6-acetyllysine is present on lysine 11.

The protein belongs to the histone-like Alba family. Acetylated. Acetylation at Lys-11 decreases DNA-binding affinity.

The protein localises to the cytoplasm. It localises to the chromosome. Binds double-stranded DNA tightly but without sequence specificity. Involved in DNA compaction. This chain is DNA/RNA-binding protein Alba, found in Pyrococcus horikoshii (strain ATCC 700860 / DSM 12428 / JCM 9974 / NBRC 100139 / OT-3).